Consider the following 166-residue polypeptide: RNA pyrophosphohydrolase (166 aa).

Positions 8 to 158 constitute a Nudix hydrolase domain; the sequence is PYRSCVGMML…KRPVYERVVK (151 aa). A Nudix box motif is present at residues 47–68; sequence GGIDPGEDYWEAAQRELLEETN.

It belongs to the Nudix hydrolase family. RppH subfamily. Requires a divalent metal cation as cofactor.

Accelerates the degradation of transcripts by removing pyrophosphate from the 5'-end of triphosphorylated RNA, leading to a more labile monophosphorylated state that can stimulate subsequent ribonuclease cleavage. The sequence is that of RNA pyrophosphohydrolase from Afipia carboxidovorans (strain ATCC 49405 / DSM 1227 / KCTC 32145 / OM5) (Oligotropha carboxidovorans).